Reading from the N-terminus, the 204-residue chain is Proteasome subunit beta type-3-A (204 aa).

Belongs to the peptidase T1B family. As to quaternary structure, component of the 20S core complex of the 26S proteasome. The 26S proteasome is composed of a core protease (CP), known as the 20S proteasome, capped at one or both ends by the 19S regulatory particle (RP/PA700). The 20S proteasome core is composed of 28 subunits that are arranged in four stacked rings, resulting in a barrel-shaped structure. The two end rings are each formed by seven alpha subunits, and the two central rings are each formed by seven beta subunits. The catalytic chamber with the active sites is on the inside of the barrel.

It localises to the cytoplasm. The protein resides in the nucleus. Its function is as follows. Non-catalytic component of the proteasome, a multicatalytic proteinase complex which is characterized by its ability to cleave peptides with Arg, Phe, Tyr, Leu, and Glu adjacent to the leaving group at neutral or slightly basic pH. The proteasome has an ATP-dependent proteolytic activity. In Arabidopsis thaliana (Mouse-ear cress), this protein is Proteasome subunit beta type-3-A (PBC1).